The primary structure comprises 202 residues: NAD(P)H dehydrogenase (quinone) 2 (202 aa).

The Flavodoxin-like domain occupies 4-190 (VLVLYYSSYG…AGAFHQGEIV (187 aa)). FMN-binding positions include 10 to 15 (SSYGHI) and 78 to 80 (TRF). Residue Tyr12 coordinates NAD(+). Trp98 lines the substrate pocket. FMN contacts are provided by residues 113-119 (STGTQHG) and His134.

This sequence belongs to the WrbA family. FMN is required as a cofactor.

The enzyme catalyses a quinone + NADH + H(+) = a quinol + NAD(+). The catalysed reaction is a quinone + NADPH + H(+) = a quinol + NADP(+). This chain is NAD(P)H dehydrogenase (quinone) 2, found in Rhizobium meliloti (strain 1021) (Ensifer meliloti).